The primary structure comprises 354 residues: Photosystem II protein D1 (354 aa).

N-acetylthreonine is present on Thr2. Phosphothreonine is present on Thr2. 3 helical membrane-spanning segments follow: residues 29–46, 118–133, and 142–156; these read YIGW…TATS, HFLL…EWEL, and WIAV…AATA. A chlorophyll a-binding site is contributed by His118. Tyr126 serves as a coordination point for pheophytin a. The [CaMn4O5] cluster site is built by Asp170 and Glu189. Residues 197-218 traverse the membrane as a helical segment; the sequence is FHMLGVAGVFGGSLFSAMHGSL. A chlorophyll a-binding site is contributed by His198. Residues His215 and 264–265 contribute to the a quinone site; that span reads SF. His215 is a binding site for Fe cation. A Fe cation-binding site is contributed by His272. Residues 274–288 form a helical membrane-spanning segment; the sequence is FLAAWPVVGIWFTAL. [CaMn4O5] cluster-binding residues include His332, Glu333, Asp342, and Ala344. Positions 345 to 354 are excised as a propeptide; the sequence is ASIEAPSLNG.

It belongs to the reaction center PufL/M/PsbA/D family. In terms of assembly, PSII is composed of 1 copy each of membrane proteins PsbA, PsbB, PsbC, PsbD, PsbE, PsbF, PsbH, PsbI, PsbJ, PsbK, PsbL, PsbM, PsbT, PsbX, PsbY, PsbZ, Psb30/Ycf12, at least 3 peripheral proteins of the oxygen-evolving complex and a large number of cofactors. It forms dimeric complexes. The D1/D2 heterodimer binds P680, chlorophylls that are the primary electron donor of PSII, and subsequent electron acceptors. It shares a non-heme iron and each subunit binds pheophytin, quinone, additional chlorophylls, carotenoids and lipids. D1 provides most of the ligands for the Mn4-Ca-O5 cluster of the oxygen-evolving complex (OEC). There is also a Cl(-1) ion associated with D1 and D2, which is required for oxygen evolution. The PSII complex binds additional chlorophylls, carotenoids and specific lipids. is required as a cofactor. In terms of processing, tyr-161 forms a radical intermediate that is referred to as redox-active TyrZ, YZ or Y-Z. C-terminally processed by CTPA; processing is essential to allow assembly of the oxygen-evolving complex and thus photosynthetic growth.

Its subcellular location is the plastid. It localises to the chloroplast thylakoid membrane. It catalyses the reaction 2 a plastoquinone + 4 hnu + 2 H2O = 2 a plastoquinol + O2. Functionally, photosystem II (PSII) is a light-driven water:plastoquinone oxidoreductase that uses light energy to abstract electrons from H(2)O, generating O(2) and a proton gradient subsequently used for ATP formation. It consists of a core antenna complex that captures photons, and an electron transfer chain that converts photonic excitation into a charge separation. The D1/D2 (PsbA/PsbD) reaction center heterodimer binds P680, the primary electron donor of PSII as well as several subsequent electron acceptors. The chain is Photosystem II protein D1 from Selaginella uncinata (Blue spike-moss).